A 633-amino-acid polypeptide reads, in one-letter code: Chaperone protein dnaK2 (633 aa).

Residue T196 is modified to Phosphothreonine; by autocatalysis. The tract at residues 600-633 is disordered; that stretch reads ATADGGPAQHAATGGPTSGGGGGDDVIDAEFDKG. Positions 624-633 are enriched in acidic residues; the sequence is DVIDAEFDKG.

This sequence belongs to the heat shock protein 70 family.

In terms of biological role, acts as a chaperone. The protein is Chaperone protein dnaK2 (dnaK2) of Streptomyces avermitilis (strain ATCC 31267 / DSM 46492 / JCM 5070 / NBRC 14893 / NCIMB 12804 / NRRL 8165 / MA-4680).